A 110-amino-acid chain; its full sequence is Protein YcgL (110 aa).

Positions Met-14–Leu-98 constitute a YcgL domain. The interval Pro-87 to Arg-110 is disordered. Positions His-97–Arg-110 are enriched in polar residues.

This Salmonella newport (strain SL254) protein is Protein YcgL.